The sequence spans 439 residues: GTPase Der (439 aa).

2 EngA-type G domains span residues 4–169 (AMVS…PQEE) and 177–352 (IKIA…EEYN). Residues 10–17 (GRPNVGKS), 57–61 (DTGGL), 120–123 (NKVD), 183–190 (GKPNVGKS), 230–234 (DTAGI), and 295–298 (NKWD) each bind GTP. In terms of domain architecture, KH-like spans 353 to 437 (KRITTGLLNN…PVVISTRKRG (85 aa)).

This sequence belongs to the TRAFAC class TrmE-Era-EngA-EngB-Septin-like GTPase superfamily. EngA (Der) GTPase family. Associates with the 50S ribosomal subunit.

GTPase that plays an essential role in the late steps of ribosome biogenesis. This Thermoanaerobacter pseudethanolicus (strain ATCC 33223 / 39E) (Clostridium thermohydrosulfuricum) protein is GTPase Der.